We begin with the raw amino-acid sequence, 288 residues long: NGG1-interacting factor 3 (288 aa).

The protein belongs to the GTP cyclohydrolase I type 2/NIF3 family. As to quaternary structure, may interact with NGG1.

It localises to the mitochondrion. In Saccharomyces cerevisiae (strain ATCC 204508 / S288c) (Baker's yeast), this protein is NGG1-interacting factor 3.